The chain runs to 542 residues: CTP synthase (542 aa).

Residues 1-265 (MARYVFITGG…DSEVLSAFGI (265 aa)) are amidoligase domain. CTP is bound at residue Ser-13. Residue Ser-13 coordinates UTP. 14-19 (SLGKGI) contacts ATP. Tyr-54 contributes to the L-glutamine binding site. Residue Asp-71 coordinates ATP. Asp-71 and Glu-139 together coordinate Mg(2+). Residues 146-148 (DIE), 186-191 (KTKPTQ), and Lys-222 each bind CTP. Residues 186 to 191 (KTKPTQ) and Lys-222 each bind UTP. One can recognise a Glutamine amidotransferase type-1 domain in the interval 291 to 541 (TIAVVGKYTG…IEAAIEQSRL (251 aa)). Residue Gly-353 coordinates L-glutamine. The active-site Nucleophile; for glutamine hydrolysis is Cys-380. L-glutamine is bound by residues 381-384 (FGMQ), Glu-404, and Arg-469. Catalysis depends on residues His-514 and Glu-516.

The protein belongs to the CTP synthase family. As to quaternary structure, homotetramer.

It catalyses the reaction UTP + L-glutamine + ATP + H2O = CTP + L-glutamate + ADP + phosphate + 2 H(+). The enzyme catalyses L-glutamine + H2O = L-glutamate + NH4(+). The catalysed reaction is UTP + NH4(+) + ATP = CTP + ADP + phosphate + 2 H(+). The protein operates within pyrimidine metabolism; CTP biosynthesis via de novo pathway; CTP from UDP: step 2/2. Its activity is regulated as follows. Allosterically activated by GTP, when glutamine is the substrate; GTP has no effect on the reaction when ammonia is the substrate. The allosteric effector GTP functions by stabilizing the protein conformation that binds the tetrahedral intermediate(s) formed during glutamine hydrolysis. Inhibited by the product CTP, via allosteric rather than competitive inhibition. Functionally, catalyzes the ATP-dependent amination of UTP to CTP with either L-glutamine or ammonia as the source of nitrogen. Regulates intracellular CTP levels through interactions with the four ribonucleotide triphosphates. This chain is CTP synthase, found in Brucella suis (strain ATCC 23445 / NCTC 10510).